Here is a 249-residue protein sequence, read N- to C-terminus: ATP synthase subunit a, chloroplastic (249 aa).

The next 5 membrane-spanning stretches (helical) occupy residues 40-60, 97-117, 136-156, 201-221, and 222-242; these read QVLITSWVVIAILLGSAVIAI, VPFIGTLFLFIFVSNWSGALL, INTTVALALLTSVAYFYAGLS, LVVVVLVSLVPLVVPIPVMFL, and GLFTSGIQALIFATLAAAYIG.

It belongs to the ATPase A chain family. In terms of assembly, F-type ATPases have 2 components, CF(1) - the catalytic core - and CF(0) - the membrane proton channel. CF(1) has five subunits: alpha(3), beta(3), gamma(1), delta(1), epsilon(1). CF(0) has four main subunits: a, b, b' and c.

It is found in the plastid. The protein localises to the chloroplast thylakoid membrane. Functionally, key component of the proton channel; it plays a direct role in the translocation of protons across the membrane. In Barbarea verna (Land cress), this protein is ATP synthase subunit a, chloroplastic.